We begin with the raw amino-acid sequence, 295 residues long: MDKAVLETQFPDMNLVRKGKVRDIYDTGEAFLMVTTDRLSAFDVVLPNGIPGKGKVLTKISEFWFKQMAPLVGNHLISTDVADFPDVCQPYAKVLSGRTMLVKKAEPLPVECIVRGYISGSGWKSYQNNGTLCGITLPKGLVESDRLPEPLYTPSTKAEVGDHDINIDFAKTVDLIGRERAEKLRDLSIQIYLKGAQTALKKGIIIADTKFEFGLVDDEVILIDEVMTPDSSRFWPMDTYAPGGAQKSYDKQFVRDWLVSSGWDMKAPGPEIPQDVIAGTVAKYQEVLELITGQK.

This sequence belongs to the SAICAR synthetase family.

It catalyses the reaction 5-amino-1-(5-phospho-D-ribosyl)imidazole-4-carboxylate + L-aspartate + ATP = (2S)-2-[5-amino-1-(5-phospho-beta-D-ribosyl)imidazole-4-carboxamido]succinate + ADP + phosphate + 2 H(+). It participates in purine metabolism; IMP biosynthesis via de novo pathway; 5-amino-1-(5-phospho-D-ribosyl)imidazole-4-carboxamide from 5-amino-1-(5-phospho-D-ribosyl)imidazole-4-carboxylate: step 1/2. The sequence is that of Phosphoribosylaminoimidazole-succinocarboxamide synthase from Desulforapulum autotrophicum (strain ATCC 43914 / DSM 3382 / VKM B-1955 / HRM2) (Desulfobacterium autotrophicum).